The following is a 299-amino-acid chain: Probable xyloglucan endotransglucosylase/hydrolase protein 10 (299 aa).

The N-terminal stretch at methionine 1–alanine 29 is a signal peptide. The GH16 domain maps to serine 30–phenylalanine 225. Asparagine 51 is a glycosylation site (N-linked (GlcNAc...) asparagine). The active-site Nucleophile is glutamate 111. Glutamate 115 serves as the catalytic Proton donor. Residues glutamate 115, glutamine 128–asparagine 130, asparagine 138–glutamate 140, serine 204–tryptophan 205, and glycine 209 contribute to the xyloglucan site. Intrachain disulfides connect cysteine 233–cysteine 242 and cysteine 280–cysteine 294. N-linked (GlcNAc...) asparagine glycosylation is present at asparagine 238. Arginine 285 provides a ligand contact to xyloglucan.

This sequence belongs to the glycosyl hydrolase 16 family. XTH group 1 subfamily. Contains at least one intrachain disulfide bond essential for its enzymatic activity.

Its subcellular location is the secreted. It localises to the cell wall. The protein localises to the extracellular space. The protein resides in the apoplast. The enzyme catalyses breaks a beta-(1-&gt;4) bond in the backbone of a xyloglucan and transfers the xyloglucanyl segment on to O-4 of the non-reducing terminal glucose residue of an acceptor, which can be a xyloglucan or an oligosaccharide of xyloglucan.. Its function is as follows. Catalyzes xyloglucan endohydrolysis (XEH) and/or endotransglycosylation (XET). Cleaves and religates xyloglucan polymers, an essential constituent of the primary cell wall, and thereby participates in cell wall construction of growing tissues. The sequence is that of Probable xyloglucan endotransglucosylase/hydrolase protein 10 (XTH10) from Arabidopsis thaliana (Mouse-ear cress).